Here is a 358-residue protein sequence, read N- to C-terminus: Glycerophosphodiester phosphodiesterase, periplasmic (358 aa).

The signal sequence occupies residues 1-25; the sequence is MKLTLKNLSMAIMMSTIVMGSSAMA. Residues 31 to 355 enclose the GP-PDE domain; that stretch reads KIVIAHRGAS…DFPDKAVKFL (325 aa). Residue His36 is the Proton acceptor of the active site. Ca(2+) is bound by residues Glu63 and Asp65. The active-site Proton donor is the His78. A Ca(2+)-binding site is contributed by Glu171.

This sequence belongs to the glycerophosphoryl diester phosphodiesterase family. Homodimer. Ca(2+) serves as cofactor.

The protein localises to the periplasm. It catalyses the reaction a sn-glycero-3-phosphodiester + H2O = an alcohol + sn-glycerol 3-phosphate + H(+). Functionally, glycerophosphodiester phosphodiesterase hydrolyzes glycerophosphodiesters into glycerol-3-phosphate (G3P) and the corresponding alcohol. The chain is Glycerophosphodiester phosphodiesterase, periplasmic (glpQ) from Escherichia coli (strain K12).